The primary structure comprises 191 residues: ATP-dependent dethiobiotin synthetase BioD 2 (191 aa).

13–18 (DVGKTI) is an ATP binding site. Thr17 provides a ligand contact to Mg(2+). The active site involves Lys38. Thr42 is a substrate binding site. Residues Asp50 and 115 to 118 (EGAG) each bind ATP. Residues Asp50 and Glu115 each contribute to the Mg(2+) site.

It belongs to the dethiobiotin synthetase family. Homodimer. The cofactor is Mg(2+).

Its subcellular location is the cytoplasm. It carries out the reaction (7R,8S)-7,8-diammoniononanoate + CO2 + ATP = (4R,5S)-dethiobiotin + ADP + phosphate + 3 H(+). Its pathway is cofactor biosynthesis; biotin biosynthesis; biotin from 7,8-diaminononanoate: step 1/2. Catalyzes a mechanistically unusual reaction, the ATP-dependent insertion of CO2 between the N7 and N8 nitrogen atoms of 7,8-diaminopelargonic acid (DAPA, also called 7,8-diammoniononanoate) to form a ureido ring. The chain is ATP-dependent dethiobiotin synthetase BioD 2 from Haemophilus influenzae (strain ATCC 51907 / DSM 11121 / KW20 / Rd).